The sequence spans 322 residues: Formimidoylglutamase (322 aa).

Mn(2+)-binding residues include histidine 130, aspartate 156, histidine 158, aspartate 160, cysteine 244, and aspartate 246.

This sequence belongs to the arginase family. The cofactor is Mn(2+).

The catalysed reaction is N-formimidoyl-L-glutamate + H2O = formamide + L-glutamate. It participates in amino-acid degradation; L-histidine degradation into L-glutamate; L-glutamate from N-formimidoyl-L-glutamate (hydrolase route): step 1/1. In terms of biological role, catalyzes the conversion of N-formimidoyl-L-glutamate to L-glutamate and formamide. The chain is Formimidoylglutamase from Geobacillus thermodenitrificans (strain NG80-2).